The primary structure comprises 362 residues: Phospho-2-dehydro-3-deoxyheptonate aldolase (362 aa).

This sequence belongs to the class-I DAHP synthase family.

It carries out the reaction D-erythrose 4-phosphate + phosphoenolpyruvate + H2O = 7-phospho-2-dehydro-3-deoxy-D-arabino-heptonate + phosphate. It functions in the pathway metabolic intermediate biosynthesis; chorismate biosynthesis; chorismate from D-erythrose 4-phosphate and phosphoenolpyruvate: step 1/7. Stereospecific condensation of phosphoenolpyruvate (PEP) and D-erythrose-4-phosphate (E4P) giving rise to 3-deoxy-D-arabino-heptulosonate-7-phosphate (DAHP). This is Phospho-2-dehydro-3-deoxyheptonate aldolase (aroG) from Haemophilus influenzae (strain ATCC 51907 / DSM 11121 / KW20 / Rd).